We begin with the raw amino-acid sequence, 153 residues long: uncharacterized protein (153 aa).

This is an uncharacterized protein from Bacillus subtilis (strain 168).